The primary structure comprises 171 residues: Peptide deformylase 1 (171 aa).

Residues cysteine 99 and histidine 141 each contribute to the Fe cation site. Glutamate 142 is a catalytic residue. Histidine 145 provides a ligand contact to Fe cation.

It belongs to the polypeptide deformylase family. Requires Fe(2+) as cofactor.

The catalysed reaction is N-terminal N-formyl-L-methionyl-[peptide] + H2O = N-terminal L-methionyl-[peptide] + formate. Its function is as follows. Removes the formyl group from the N-terminal Met of newly synthesized proteins. Requires at least a dipeptide for an efficient rate of reaction. N-terminal L-methionine is a prerequisite for activity but the enzyme has broad specificity at other positions. The chain is Peptide deformylase 1 from Xanthomonas campestris pv. campestris (strain ATCC 33913 / DSM 3586 / NCPPB 528 / LMG 568 / P 25).